The sequence spans 722 residues: Homeobox-leucine zipper protein HDG11 (722 aa).

A compositionally biased stretch (gly residues) spans Met1–Gly19. Residues Met1–Gln42 form a disordered region. Residues Gly20–Arg31 show a composition bias toward basic and acidic residues. Residues Lys32 to His91 constitute a DNA-binding region (homeobox). Positions Gln81–Lys161 form a coiled coil. One can recognise an START domain in the interval Ser227 to Ser460.

Belongs to the HD-ZIP homeobox family. Class IV subfamily. Interacts with BBM. As to expression, expressed in apical meristems and young epidermal tissue including trichomes and stipules. Expressed in lateral root tips, the L1 layer of apical inflorescence meristems and early flower primordia, carpel and petal epidermis, stigma papillae, ovule primordia, nucellus and embryo.

It localises to the nucleus. Functionally, transcription factor which acts as a positive regulator of drought stress tolerance. Can transactivate CIPK3, NCED3 and ERECTA. Transactivates several cell-wall-loosening protein genes by directly binding to HD motifs in their promoters. These target genes play important roles in coordinating cell-wall extensibility with root development and growth. Transactivates CYP74A/AOS, AOC3, OPR3 and 4CLL5/OPCL1 genes by directly binding to HD motifs in their promoters. These target genes are involved in jasmonate (JA) biosynthesis, and JA signaling affects root architecture by activating auxin signaling, which promotes lateral root formation. Acts as a negative regulator of trichome branching. Required for the establishment of giant cell identity on the abaxial side of sepals. Seems to promote cell differentiation. May regulate cell differentiation and proliferation during root and shoot meristem development. The protein is Homeobox-leucine zipper protein HDG11 of Arabidopsis thaliana (Mouse-ear cress).